A 423-amino-acid chain; its full sequence is COP9 signalosome complex subunit 3 (423 aa).

Positions 197-365 (NFERAMYFYE…GMVCFHDSPE (169 aa)) constitute a PCI domain. The span at 401-410 (PQFVQKSMGS) shows a compositional bias: polar residues. Positions 401–423 (PQFVQKSMGSQEDDSGSKPSSYS) are disordered.

The protein belongs to the CSN3 family. Component of the CSN complex, probably composed of cops1, cops2, cops3, cops4, cops5, cops6, cops7, cops8 and cops9.

Its subcellular location is the cytoplasm. It is found in the nucleus. Component of the COP9 signalosome complex (CSN), a complex involved in various cellular and developmental processes. The CSN complex is an essential regulator of the ubiquitin (Ubl) conjugation pathway by mediating the deneddylation of the cullin subunits of E3 ligase complexes, leading to modify the Ubl ligase activity. This chain is COP9 signalosome complex subunit 3 (cops3), found in Xenopus laevis (African clawed frog).